A 104-amino-acid chain; its full sequence is Large ribosomal subunit protein bL21 (104 aa).

The protein belongs to the bacterial ribosomal protein bL21 family. As to quaternary structure, part of the 50S ribosomal subunit. Contacts protein L20.

In terms of biological role, this protein binds to 23S rRNA in the presence of protein L20. The protein is Large ribosomal subunit protein bL21 of Rhodopirellula baltica (strain DSM 10527 / NCIMB 13988 / SH1).